Consider the following 277-residue polypeptide: Phosphatidylglycerol--prolipoprotein diacylglyceryl transferase (277 aa).

The next 4 membrane-spanning stretches (helical) occupy residues 18 to 38 (ISVKWYGVIIASAVVIALLLA), 51 to 71 (IIVDLLIWAIPISIISARIYY), 89 to 109 (IWHGGIAIYGALIGAVLTAII), and 116 to 136 (ISFWQLADVVAPSLIIAQAIG). Arg137 lines the a 1,2-diacyl-sn-glycero-3-phospho-(1'-sn-glycerol) pocket. The next 3 membrane-spanning stretches (helical) occupy residues 177-197 (QPTFLYESLWNVLGFIVLLII), 205-225 (GELFLGYVIWYSFGRFFIEGM), and 235-255 (FRVSQVLSLLLIVLSIGIIIY).

This sequence belongs to the Lgt family.

The protein localises to the cell membrane. It catalyses the reaction L-cysteinyl-[prolipoprotein] + a 1,2-diacyl-sn-glycero-3-phospho-(1'-sn-glycerol) = an S-1,2-diacyl-sn-glyceryl-L-cysteinyl-[prolipoprotein] + sn-glycerol 1-phosphate + H(+). It participates in protein modification; lipoprotein biosynthesis (diacylglyceryl transfer). Catalyzes the transfer of the diacylglyceryl group from phosphatidylglycerol to the sulfhydryl group of the N-terminal cysteine of a prolipoprotein, the first step in the formation of mature lipoproteins. This is Phosphatidylglycerol--prolipoprotein diacylglyceryl transferase from Listeria monocytogenes serotype 4b (strain CLIP80459).